We begin with the raw amino-acid sequence, 143 residues long: MSLRHMSRRASRFGVVAVASIGLAAAAQSVAFAAPAFSVSPASGLSDGQSVSVSVSGAAAGETYYIAQCAPVGGQDACNPATATSFTTDASGAASFSFVVRKSYTGSTPEGTPVGSVDCATAACNLGAGNSGLDLGHVALTFG.

Residues 1-33 (MSLRHMSRRASRFGVVAVASIGLAAAAQSVAFA) form the signal peptide. 2 disulfide bridges follow: C69–C78 and C119–C124.

The protein belongs to the neocarzinostatin family.

Its function is as follows. Binds non-covalently to a chromophore which is the cytotoxic and mutagenic component of the antibiotic. The chromophore binds to DNA as a weak intercalator and causes single- and double-strand breaks. The protein is Antitumor antibiotic C-1027 apoprotein (cagA) of Streptomyces globisporus.